We begin with the raw amino-acid sequence, 926 residues long: Tyrosine-protein phosphatase non-receptor type 4 (926 aa).

An FERM domain is found at 29 to 312 (VVCNILLLDN…EHHTFFRLDR (284 aa)). Disordered regions lie at residues 379-412 (SDDRLETQSLPSRSPPGTPNHRNSSFTQEATRVR), 429-474 (SEDF…KKNS), and 492-511 (NESFDVPSSPEKSTPNGGIP). Composition is skewed to polar residues over residues 398–408 (NHRNSSFTQEA) and 432–455 (FVSQRSPSSTQANSIVLESSPSQE). A Phosphoserine modification is found at S474. The PDZ domain maps to 517-589 (LIKMKPDENG…DQVVLFIKAS (73 aa)). Residues 655-911 (VLAQFDQLYR…RFVCEAILKV (257 aa)) enclose the Tyrosine-protein phosphatase domain. Substrate is bound by residues D820, 852 to 858 (CSAGIGR), and Q896. Residue C852 is the Phosphocysteine intermediate of the active site.

This sequence belongs to the protein-tyrosine phosphatase family. Non-receptor class subfamily. In terms of tissue distribution, highly expressed in testis. Specifically expressed in spermatocytes and spermatids within seminiferous tubules (at protein level).

The protein localises to the cell membrane. Its subcellular location is the cytoplasm. It is found in the cytoskeleton. The enzyme catalyses O-phospho-L-tyrosyl-[protein] + H2O = L-tyrosyl-[protein] + phosphate. In terms of biological role, phosphatase that plays a role in immunity, learning, synaptic plasticity or cell homeostasis. Regulates neuronal cell homeostasis by protecting neurons against apoptosis. Negatively regulates TLR4-induced interferon beta production by dephosphorylating adapter TICAM2 and inhibiting subsequent TRAM-TRIF interaction. Dephosphorylates also the immunoreceptor tyrosine-based activation motifs/ITAMs of the TCR zeta subunit and thereby negatively regulates TCR-mediated signaling pathway. May act at junctions between the membrane and the cytoskeleton. The protein is Tyrosine-protein phosphatase non-receptor type 4 (Ptpn4) of Mus musculus (Mouse).